Reading from the N-terminus, the 585-residue chain is uncharacterized protein (585 aa).

Residues 1–18 (MSALSTKLEPTNSYSESL) are compositionally biased toward polar residues. Residues 1–23 (MSALSTKLEPTNSYSESLPPQRR) form a disordered region.

This sequence belongs to the protein kinase superfamily. ADCK protein kinase family.

This is an uncharacterized protein from Synechocystis sp. (strain ATCC 27184 / PCC 6803 / Kazusa).